The chain runs to 150 residues: 3-dehydroquinate dehydratase (150 aa).

The Proton acceptor role is filled by Y26. Residues N77, H83, and D90 each contribute to the substrate site. Residue H103 is the Proton donor of the active site. Residues L104–S105 and R114 each bind substrate.

The protein belongs to the type-II 3-dehydroquinase family. In terms of assembly, homododecamer.

The catalysed reaction is 3-dehydroquinate = 3-dehydroshikimate + H2O. The protein operates within metabolic intermediate biosynthesis; chorismate biosynthesis; chorismate from D-erythrose 4-phosphate and phosphoenolpyruvate: step 3/7. Catalyzes a trans-dehydration via an enolate intermediate. This is 3-dehydroquinate dehydratase from Enterobacter sp. (strain 638).